Here is a 308-residue protein sequence, read N- to C-terminus: Homoserine kinase (308 aa).

ATP is bound at residue 85–95 (PLTRGLGSSAA).

This sequence belongs to the GHMP kinase family. Homoserine kinase subfamily.

It localises to the cytoplasm. The enzyme catalyses L-homoserine + ATP = O-phospho-L-homoserine + ADP + H(+). It participates in amino-acid biosynthesis; L-threonine biosynthesis; L-threonine from L-aspartate: step 4/5. In terms of biological role, catalyzes the ATP-dependent phosphorylation of L-homoserine to L-homoserine phosphate. This chain is Homoserine kinase, found in Caldicellulosiruptor saccharolyticus (strain ATCC 43494 / DSM 8903 / Tp8T 6331).